A 211-amino-acid chain; its full sequence is Heat shock 70 kDa protein 4L (211 aa).

At Ser161 the chain carries Phosphoserine.

This sequence belongs to the heat shock protein 70 family. In terms of assembly, homodimer.

It is found in the cytoplasm. Its subcellular location is the nucleus. In terms of biological role, possesses chaperone activity in vitro where it inhibits aggregation of citrate synthase. This chain is Heat shock 70 kDa protein 4L, found in Mesocricetus auratus (Golden hamster).